Reading from the N-terminus, the 87-residue chain is Small ribosomal subunit protein bS20 (87 aa).

The segment at 1 to 26 (MANIKSAQKRAVQSEKRRQHNASQRS) is disordered.

It belongs to the bacterial ribosomal protein bS20 family.

Its function is as follows. Binds directly to 16S ribosomal RNA. The chain is Small ribosomal subunit protein bS20 from Glaesserella parasuis serovar 5 (strain SH0165) (Haemophilus parasuis).